Consider the following 545-residue polypeptide: CTP synthase (545 aa).

Residues 1-265 form an amidoligase domain region; sequence MSRFIFVTGG…DAIVVEKFGL (265 aa). S13 is a binding site for CTP. S13 serves as a coordination point for UTP. Residue 14–19 participates in ATP binding; sequence SLGKGI. Y54 contributes to the L-glutamine binding site. D71 is an ATP binding site. Residues D71 and E139 each contribute to the Mg(2+) site. Residues 146-148, 186-191, and K222 each bind CTP; these read DIE and KTKPTQ. Residues 186-191 and K222 each bind UTP; that span reads KTKPTQ. The 252-residue stretch at 290 to 541 folds into the Glutamine amidotransferase type-1 domain; sequence TVGMVGKYIE…VAAALAEQKA (252 aa). G351 contributes to the L-glutamine binding site. C378 acts as the Nucleophile; for glutamine hydrolysis in catalysis. L-glutamine contacts are provided by residues 379 to 382, E402, and R469; that span reads LGMQ. Active-site residues include H514 and E516.

This sequence belongs to the CTP synthase family. Homotetramer.

It catalyses the reaction UTP + L-glutamine + ATP + H2O = CTP + L-glutamate + ADP + phosphate + 2 H(+). It carries out the reaction L-glutamine + H2O = L-glutamate + NH4(+). The catalysed reaction is UTP + NH4(+) + ATP = CTP + ADP + phosphate + 2 H(+). It participates in pyrimidine metabolism; CTP biosynthesis via de novo pathway; CTP from UDP: step 2/2. Allosterically activated by GTP, when glutamine is the substrate; GTP has no effect on the reaction when ammonia is the substrate. The allosteric effector GTP functions by stabilizing the protein conformation that binds the tetrahedral intermediate(s) formed during glutamine hydrolysis. Inhibited by the product CTP, via allosteric rather than competitive inhibition. Functionally, catalyzes the ATP-dependent amination of UTP to CTP with either L-glutamine or ammonia as the source of nitrogen. Regulates intracellular CTP levels through interactions with the four ribonucleotide triphosphates. The chain is CTP synthase from Alcanivorax borkumensis (strain ATCC 700651 / DSM 11573 / NCIMB 13689 / SK2).